We begin with the raw amino-acid sequence, 526 residues long: Peptide chain release factor 3 (526 aa).

The 269-residue stretch at 9–277 (NKRRTFAIIS…DFVEYAPGPQ (269 aa)) folds into the tr-type G domain. GTP contacts are provided by residues 18–25 (SHPDAGKT), 86–90 (DTPGH), and 140–143 (NKLD).

The protein belongs to the TRAFAC class translation factor GTPase superfamily. Classic translation factor GTPase family. PrfC subfamily.

It localises to the cytoplasm. In terms of biological role, increases the formation of ribosomal termination complexes and stimulates activities of RF-1 and RF-2. It binds guanine nucleotides and has strong preference for UGA stop codons. It may interact directly with the ribosome. The stimulation of RF-1 and RF-2 is significantly reduced by GTP and GDP, but not by GMP. The polypeptide is Peptide chain release factor 3 (Legionella pneumophila (strain Paris)).